Here is a 233-residue protein sequence, read N- to C-terminus: C-type lectin domain family 2 member D5 (233 aa).

The disordered stretch occupies residues 1–52 (MPSSAHLQDPPPLLSRTLTQNEGQTSLRQSSSCGPSAASASESLSGSTESRI). At 1–76 (MPSSAHLQDP…PLEYPAGLYC (76 aa)) the chain is on the cytoplasmic side. Over residues 16-29 (RTLTQNEGQTSLRQ) the composition is skewed to polar residues. Over residues 30–50 (SSSCGPSAASASESLSGSTES) the composition is skewed to low complexity. A helical; Signal-anchor for type II membrane protein membrane pass occupies residues 77 to 97 (CYVVIIVLSVAVVALSVALSV). Over 98–233 (KKTAQISTIN…KPNSYTSQCL (136 aa)) the chain is Extracellular. Positions 119 to 228 (VGNKCFYFNE…KSICRKPNSY (110 aa)) constitute a C-type lectin domain. N-linked (GlcNAc...) asparagine glycosylation occurs at Asn-132.

The protein localises to the cell membrane. Functionally, lectin-type cell surface receptor. The chain is C-type lectin domain family 2 member D5 (Ocil) from Rattus norvegicus (Rat).